A 372-amino-acid polypeptide reads, in one-letter code: Queuine tRNA-ribosyltransferase (372 aa).

Aspartate 92 acts as the Proton acceptor in catalysis. Substrate contacts are provided by residues 92–96, aspartate 146, glutamine 188, and glycine 215; that span reads DSGGF. The RNA binding stretch occupies residues 246 to 252; sequence GIGTLRE. Aspartate 265 (nucleophile) is an active-site residue. The interval 270–274 is RNA binding; important for wobble base 34 recognition; that stretch reads TRLGR. 4 residues coordinate Zn(2+): cysteine 303, cysteine 305, cysteine 308, and histidine 334.

This sequence belongs to the queuine tRNA-ribosyltransferase family. In terms of assembly, homodimer. Within each dimer, one monomer is responsible for RNA recognition and catalysis, while the other monomer binds to the replacement base PreQ1. Zn(2+) serves as cofactor.

The catalysed reaction is 7-aminomethyl-7-carbaguanine + guanosine(34) in tRNA = 7-aminomethyl-7-carbaguanosine(34) in tRNA + guanine. It participates in tRNA modification; tRNA-queuosine biosynthesis. Functionally, catalyzes the base-exchange of a guanine (G) residue with the queuine precursor 7-aminomethyl-7-deazaguanine (PreQ1) at position 34 (anticodon wobble position) in tRNAs with GU(N) anticodons (tRNA-Asp, -Asn, -His and -Tyr). Catalysis occurs through a double-displacement mechanism. The nucleophile active site attacks the C1' of nucleotide 34 to detach the guanine base from the RNA, forming a covalent enzyme-RNA intermediate. The proton acceptor active site deprotonates the incoming PreQ1, allowing a nucleophilic attack on the C1' of the ribose to form the product. After dissociation, two additional enzymatic reactions on the tRNA convert PreQ1 to queuine (Q), resulting in the hypermodified nucleoside queuosine (7-(((4,5-cis-dihydroxy-2-cyclopenten-1-yl)amino)methyl)-7-deazaguanosine). In Synechococcus sp. (strain CC9605), this protein is Queuine tRNA-ribosyltransferase.